The primary structure comprises 240 residues: Small ribosomal subunit protein uS3 (240 aa).

Positions 39-109 (IRQYIEKTLN…QIRVNVIEVP (71 aa)) constitute a KH type-2 domain. Positions 219–240 (APPSQPRRKSRRQQFDDRSQDG) are disordered. Over residues 231-240 (QQFDDRSQDG) the composition is skewed to basic and acidic residues.

The protein belongs to the universal ribosomal protein uS3 family. Part of the 30S ribosomal subunit. Forms a tight complex with proteins S10 and S14.

Its function is as follows. Binds the lower part of the 30S subunit head. Binds mRNA in the 70S ribosome, positioning it for translation. The chain is Small ribosomal subunit protein uS3 from Synechocystis sp. (strain ATCC 27184 / PCC 6803 / Kazusa).